The chain runs to 361 residues: Chitinase-3-like protein 1 (361 aa).

The GH18 domain maps to 1 to 361; the sequence is YKLICYYTSW…SAVKDVLAEV (361 aa). C5 and C30 are joined by a disulfide. The N-linked (GlcNAc...) asparagine glycan is linked to N39. Chitin is bound by residues 49–50, 76–79, Y120, 183–186, and R241; these read EW, GGWN, and LTYD. C278 and C342 form a disulfide bridge. Residues 302 to 316 are important for AKT1 activation and IL8 production; that stretch reads QWVAYDDQESVKNKA. W330 is a binding site for chitin. N-linked (GlcNAc...) asparagine glycosylation occurs at N345.

The protein belongs to the glycosyl hydrolase 18 family. As to quaternary structure, monomer. Detected in mammary gland.

It is found in the secreted. It localises to the extracellular space. The protein localises to the cytoplasm. The protein resides in the perinuclear region. Its subcellular location is the endoplasmic reticulum. Functionally, carbohydrate-binding lectin with a preference for chitin. Has no chitinase activity. May play a role in tissue remodeling and in the capacity of cells to respond to and cope with changes in their environment. Plays a role in T-helper cell type 2 (Th2) inflammatory response and IL-13-induced inflammation, regulating allergen sensitization, inflammatory cell apoptosis, dendritic cell accumulation and M2 macrophage differentiation. Facilitates invasion of pathogenic enteric bacteria into colonic mucosa and lymphoid organs. Mediates activation of AKT1 signaling pathway and subsequent IL8 production in colonic epithelial cells. Regulates antibacterial responses in lung by contributing to macrophage bacterial killing, controlling bacterial dissemination and augmenting host tolerance. Also regulates hyperoxia-induced injury, inflammation and epithelial apoptosis in lung. The chain is Chitinase-3-like protein 1 (CHI3L1) from Ovis aries (Sheep).